A 463-amino-acid chain; its full sequence is Interleukin enhancer-binding factor 2 (463 aa).

Residue arginine 94 is modified to Asymmetric dimethylarginine; alternate. Residue arginine 94 is modified to Omega-N-methylarginine; alternate. The 337-residue stretch at 108 to 444 (RHILAYDWLA…PEKKEGEEEE (337 aa)) folds into the DZF domain. Arginine 145 is modified (omega-N-methylarginine). Lysine 166 is covalently cross-linked (Glycyl lysine isopeptide (Lys-Gly) (interchain with G-Cter in ubiquitin)). Phosphoserine occurs at positions 173 and 189. Residues lysine 259 and lysine 437 each participate in a glycyl lysine isopeptide (Lys-Gly) (interchain with G-Cter in SUMO2) cross-link. Positions 424 to 463 (VTPSEKAYEKPPEKKEGEEEEENTEEPPQGEEEESMETQE) are disordered. Residues 429–440 (KAYEKPPEKKEG) show a composition bias toward basic and acidic residues. The segment covering 441 to 463 (EEEEENTEEPPQGEEEESMETQE) has biased composition (acidic residues). Threonine 461 is modified (phosphothreonine).

Forms heterodimers with ILF3. ILF2-ILF3 heterodimers may also bind to PRKDC/XRCC7: this may stabilize the interaction of PRKDC/XRCC7 and the heterodimeric complex of G22P1/KU70 and XRCC5/KU80. Forms a complex with ILF3, YLPM1, KHDRBS1, RBMX, NCOA5 and PPP1CA. Identified in a IGF2BP1-dependent mRNP granule complex containing untranslated mRNAs. Interacts with IGF2BP1. Interacts with CRBN; this interaction promotes ubiquitination and subsequent degradation of ILF2. Ubiquitinated at Lys-166 by CRBN with polyubiquitin chains by the CUL4-RING E3 ligase (CRL4-CRBN) and then degraded by the proteasome.

Its subcellular location is the nucleus. It localises to the nucleolus. The protein resides in the cytoplasm. Chromatin-interacting protein that forms a stable heterodimer with interleukin enhancer-binding factor 3/ILF3 and plays a role in several biological processes including transcription, innate immunity or cell growth. Essential for the efficient reshuttling of ILF3 (isoform 1 and isoform 2) into the nucleus. Together with ILF3, forms an RNA-binding complex that is required for mitotic progression and cytokinesis by regulating the expression of a cluster of mitotic genes. Mechanistically, competes with STAU1/STAU2-mediated mRNA decay. Plays also a role in the inhibition of various viruses including Japanese encephalitis virus or enterovirus 71. The polypeptide is Interleukin enhancer-binding factor 2 (Ilf2) (Rattus norvegicus (Rat)).